The primary structure comprises 164 residues: Peptide deformylase (164 aa).

Residues Cys-87 and His-129 each coordinate Fe cation. Glu-130 is an active-site residue. His-133 contributes to the Fe cation binding site.

The protein belongs to the polypeptide deformylase family. Fe(2+) serves as cofactor.

The enzyme catalyses N-terminal N-formyl-L-methionyl-[peptide] + H2O = N-terminal L-methionyl-[peptide] + formate. Its function is as follows. Removes the formyl group from the N-terminal Met of newly synthesized proteins. Requires at least a dipeptide for an efficient rate of reaction. N-terminal L-methionine is a prerequisite for activity but the enzyme has broad specificity at other positions. The chain is Peptide deformylase from Thermotoga neapolitana (strain ATCC 49049 / DSM 4359 / NBRC 107923 / NS-E).